Reading from the N-terminus, the 173-residue chain is DNA-directed RNA polymerase subunit delta (173 aa).

The HTH HARE-type domain occupies 14–81; it reads MALVEIAHEL…SDQTWGLRSW (68 aa). Positions 110–173 are disordered; it reads LDLDEFEEID…DYDDEEEEIK (64 aa).

This sequence belongs to the RpoE family. RNAP is composed of a core of 2 alpha, a beta and a beta' subunit. The core is associated with a delta subunit, and at least one of epsilon or omega. When a sigma factor is associated with the core the holoenzyme is formed, which can initiate transcription.

In terms of biological role, participates in both the initiation and recycling phases of transcription. In the presence of the delta subunit, RNAP displays an increased specificity of transcription, a decreased affinity for nucleic acids, and an increased efficiency of RNA synthesis because of enhanced recycling. May function in sigma factor switching. It displaces RNA bound to RNA polymerase in a binary complex. The protein is DNA-directed RNA polymerase subunit delta of Bacillus subtilis (strain 168).